The primary structure comprises 436 residues: Protein GOLM2 (436 aa).

Methionine 1 is modified (N-acetylmethionine). The Cytoplasmic segment spans residues 1-14 (MVGFGANRRAGRLP). Residues 15 to 35 (SLVLVVLLVVIVVLAFNYWSI) form a helical; Signal-anchor for type II membrane protein membrane-spanning segment. Positions 35 to 198 (ISSRHVLLQE…EEQKQETQKI (164 aa)) form a coiled coil. Residues 36-436 (SSRHVLLQEE…YGKQHFNDVL (401 aa)) lie on the Lumenal side of the membrane. Residues 225-247 (ADKNEEPSSNHIPHGKEQIKRGG) show a composition bias toward basic and acidic residues. The segment at 225-436 (ADKNEEPSSN…YGKQHFNDVL (212 aa)) is disordered. Serine 233 and serine 275 each carry phosphoserine. Over residues 305–321 (NHNGNPGTSKQNPSSPL) the composition is skewed to polar residues. Phosphoserine occurs at positions 328 and 332. Basic and acidic residues predominate over residues 344 to 362 (ATKDRVSDFHKLKQSRFFD). The residue at position 366 (serine 366) is a Phosphoserine. The segment covering 399-418 (YNEEEDGDGGEEDVQDDEER) has biased composition (acidic residues). Residues 426–436 (DYGKQHFNDVL) show a composition bias toward basic and acidic residues.

The protein belongs to the GOLM family.

The protein resides in the membrane. The chain is Protein GOLM2 from Homo sapiens (Human).